A 761-amino-acid polypeptide reads, in one-letter code: Mitochondrial intermediate peptidase 1 (761 aa).

Position 530 (His-530) interacts with Zn(2+). Glu-531 is an active-site residue. 2 residues coordinate Zn(2+): His-534 and His-537.

The protein belongs to the peptidase M3 family. Zn(2+) serves as cofactor.

It is found in the mitochondrion matrix. It catalyses the reaction Release of an N-terminal octapeptide as second stage of processing of some proteins imported into the mitochondrion.. Functionally, cleaves proteins, imported into the mitochondrion, to their mature size. While most mitochondrial precursor proteins are processed to the mature form in one step by mitochondrial processing peptidase (MPP), the sequential cleavage by MIP of an octapeptide after initial processing by MPP is a required step for a subgroup of nuclear-encoded precursor proteins destined for the matrix or the inner membrane. This Cryptococcus neoformans var. neoformans serotype D (strain B-3501A) (Filobasidiella neoformans) protein is Mitochondrial intermediate peptidase 1 (OCT1).